A 247-amino-acid chain; its full sequence is Aspartate/glutamate leucyltransferase (247 aa).

This sequence belongs to the R-transferase family. Bpt subfamily.

It localises to the cytoplasm. The catalysed reaction is N-terminal L-glutamyl-[protein] + L-leucyl-tRNA(Leu) = N-terminal L-leucyl-L-glutamyl-[protein] + tRNA(Leu) + H(+). It catalyses the reaction N-terminal L-aspartyl-[protein] + L-leucyl-tRNA(Leu) = N-terminal L-leucyl-L-aspartyl-[protein] + tRNA(Leu) + H(+). In terms of biological role, functions in the N-end rule pathway of protein degradation where it conjugates Leu from its aminoacyl-tRNA to the N-termini of proteins containing an N-terminal aspartate or glutamate. The polypeptide is Aspartate/glutamate leucyltransferase (Chromohalobacter salexigens (strain ATCC BAA-138 / DSM 3043 / CIP 106854 / NCIMB 13768 / 1H11)).